A 433-amino-acid polypeptide reads, in one-letter code: tRNA modification GTPase MnmE (433 aa).

3 residues coordinate (6S)-5-formyl-5,6,7,8-tetrahydrofolate: arginine 24, glutamate 86, and lysine 125. The TrmE-type G domain occupies 218 to 363; it reads GARLALIGAP…LKEALREALL (146 aa). Residue asparagine 228 coordinates K(+). GTP is bound by residues 228 to 233, 247 to 253, and 272 to 275; these read NAGKSS, SPIPGTT, and DTAG. Serine 232 provides a ligand contact to Mg(2+). Positions 247, 249, and 252 each coordinate K(+). Position 253 (threonine 253) interacts with Mg(2+). Residue lysine 433 coordinates (6S)-5-formyl-5,6,7,8-tetrahydrofolate.

It belongs to the TRAFAC class TrmE-Era-EngA-EngB-Septin-like GTPase superfamily. TrmE GTPase family. As to quaternary structure, homodimer. Heterotetramer of two MnmE and two MnmG subunits. It depends on K(+) as a cofactor.

It localises to the cytoplasm. Its function is as follows. Exhibits a very high intrinsic GTPase hydrolysis rate. Involved in the addition of a carboxymethylaminomethyl (cmnm) group at the wobble position (U34) of certain tRNAs, forming tRNA-cmnm(5)s(2)U34. The protein is tRNA modification GTPase MnmE of Thermus thermophilus (strain ATCC BAA-163 / DSM 7039 / HB27).